A 180-amino-acid polypeptide reads, in one-letter code: uncharacterized protein (180 aa).

Residues 17-80 form the HTH dtxR-type domain; the sequence is RRSRILHYLM…LIPNMGVRLT (64 aa).

The protein belongs to the DtxR/MntR family.

This is an uncharacterized protein from Aeropyrum pernix (strain ATCC 700893 / DSM 11879 / JCM 9820 / NBRC 100138 / K1).